A 230-amino-acid polypeptide reads, in one-letter code: uncharacterized protein (230 aa).

The 69-residue stretch at K12–Q80 folds into the HTH gntR-type domain. Positions E40–K59 form a DNA-binding region, H-T-H motif.

This is an uncharacterized protein from Escherichia coli (strain K12).